A 434-amino-acid chain; its full sequence is Gamma-glutamyl phosphate reductase (434 aa).

This sequence belongs to the gamma-glutamyl phosphate reductase family.

Its subcellular location is the cytoplasm. The catalysed reaction is L-glutamate 5-semialdehyde + phosphate + NADP(+) = L-glutamyl 5-phosphate + NADPH + H(+). It functions in the pathway amino-acid biosynthesis; L-proline biosynthesis; L-glutamate 5-semialdehyde from L-glutamate: step 2/2. Functionally, catalyzes the NADPH-dependent reduction of L-glutamate 5-phosphate into L-glutamate 5-semialdehyde and phosphate. The product spontaneously undergoes cyclization to form 1-pyrroline-5-carboxylate. This chain is Gamma-glutamyl phosphate reductase, found in Trichormus variabilis (strain ATCC 29413 / PCC 7937) (Anabaena variabilis).